The chain runs to 375 residues: Chaperone protein DnaJ (375 aa).

Residues 5-70 (DYYEVLGVAR…NKRRAYDAHG (66 aa)) form the J domain. The CR-type zinc-finger motif lies at 131-208 (GIERRIEIPT…CHGAGRVEED (78 aa)). Zn(2+)-binding residues include Cys144, Cys147, Cys160, Cys163, Cys182, Cys185, Cys196, and Cys199. CXXCXGXG motif repeat units lie at residues 144–151 (CAPCHGSG), 160–167 (CGTCHGRG), 182–189 (CPHCDGRG), and 196–203 (CKTCHGAG).

Belongs to the DnaJ family. As to quaternary structure, homodimer. Requires Zn(2+) as cofactor.

The protein resides in the cytoplasm. Its function is as follows. Participates actively in the response to hyperosmotic and heat shock by preventing the aggregation of stress-denatured proteins and by disaggregating proteins, also in an autonomous, DnaK-independent fashion. Unfolded proteins bind initially to DnaJ; upon interaction with the DnaJ-bound protein, DnaK hydrolyzes its bound ATP, resulting in the formation of a stable complex. GrpE releases ADP from DnaK; ATP binding to DnaK triggers the release of the substrate protein, thus completing the reaction cycle. Several rounds of ATP-dependent interactions between DnaJ, DnaK and GrpE are required for fully efficient folding. Also involved, together with DnaK and GrpE, in the DNA replication of plasmids through activation of initiation proteins. The protein is Chaperone protein DnaJ of Xanthomonas euvesicatoria pv. vesicatoria (strain 85-10) (Xanthomonas campestris pv. vesicatoria).